A 166-amino-acid chain; its full sequence is Ureidoglycolate lyase (166 aa).

This sequence belongs to the ureidoglycolate lyase family. Homodimer. Ni(2+) serves as cofactor.

It catalyses the reaction (S)-ureidoglycolate = urea + glyoxylate. It participates in nitrogen metabolism; (S)-allantoin degradation. In terms of biological role, catalyzes the catabolism of the allantoin degradation intermediate (S)-ureidoglycolate, generating urea and glyoxylate. Involved in the utilization of allantoin as nitrogen source. This chain is Ureidoglycolate lyase, found in Rhizobium leguminosarum bv. trifolii (strain WSM2304).